The following is a 535-amino-acid chain: Probable fucosyltransferase 4 (535 aa).

Residues 1–20 (MYHIFQISGEVIKGLGLKTK) are Cytoplasmic-facing. A helical; Signal-anchor for type II membrane protein membrane pass occupies residues 21-41 (ILITIVFSTLLILSVMLLSFS). Residues 42 to 535 (NNFNNKLFAA…IWGLKLFDEL (494 aa)) are Lumenal-facing. N-linked (GlcNAc...) asparagine glycans are attached at residues Asn136, Asn226, Asn230, Asn377, and Asn409.

It belongs to the glycosyltransferase 37 family. In terms of tissue distribution, expressed in roots, stems, leaves, flowers, siliques and seedlings.

The protein localises to the golgi apparatus. Its subcellular location is the golgi stack membrane. It functions in the pathway protein modification; protein glycosylation. Functionally, may be involved in cell wall biosynthesis. May act as a fucosyltransferase. In Arabidopsis thaliana (Mouse-ear cress), this protein is Probable fucosyltransferase 4 (FUT4).